The primary structure comprises 229 residues: Interleukin-27 subunit beta (229 aa).

The signal sequence occupies residues 1–20 (MTPQLLLALVLWASCPPCSG). Fibronectin type-III domains follow at residues 24-130 (PPAA…IKPD) and 131-227 (PPEG…TMSL). Residues N55 and N105 are each glycosylated (N-linked (GlcNAc...) asparagine).

It belongs to the type I cytokine receptor family. Type 3 subfamily. Heterodimer with IL27/IL27A; not disulfide-linked. This heterodimer is known as interleukin IL-27. Heterodimer with IL12A; not disulfide-linked. This heterodimer is known as interleukin IL-35. Interacts with SQSTM1.

The protein resides in the secreted. Its function is as follows. Associates with IL27 to form the IL-27 interleukin, a heterodimeric cytokine which functions in innate immunity. IL-27 has pro- and anti-inflammatory properties, that can regulate T-helper cell development, suppress T-cell proliferation, stimulate cytotoxic T-cell activity, induce isotype switching in B-cells, and that has diverse effects on innate immune cells. Among its target cells are CD4 T-helper cells which can differentiate in type 1 effector cells (TH1), type 2 effector cells (TH2) and IL17 producing helper T-cells (TH17). It drives rapid clonal expansion of naive but not memory CD4 T-cells. It also strongly synergizes with IL-12 to trigger interferon-gamma/IFN-gamma production of naive CD4 T-cells, binds to the cytokine receptor WSX-1/TCCR. Another important role of IL-27 is its antitumor activity as well as its antiangiogenic activity with activation of production of antiangiogenic chemokines. The polypeptide is Interleukin-27 subunit beta (EBI3) (Homo sapiens (Human)).